Consider the following 247-residue polypeptide: DNA polymerase sliding clamp (247 aa).

It belongs to the PCNA family. Homotrimer. The subunits circularize to form a toroid; DNA passes through its center. Replication factor C (RFC) is required to load the toroid on the DNA.

In terms of biological role, sliding clamp subunit that acts as a moving platform for DNA processing. Responsible for tethering the catalytic subunit of DNA polymerase and other proteins to DNA during high-speed replication. The protein is DNA polymerase sliding clamp of Thermofilum pendens (strain DSM 2475 / Hrk 5).